A 124-amino-acid chain; its full sequence is Large ribosomal subunit protein bL12 (124 aa).

Belongs to the bacterial ribosomal protein bL12 family. Homodimer. Part of the ribosomal stalk of the 50S ribosomal subunit. Forms a multimeric L10(L12)X complex, where L10 forms an elongated spine to which 2 to 4 L12 dimers bind in a sequential fashion. Binds GTP-bound translation factors.

Its function is as follows. Forms part of the ribosomal stalk which helps the ribosome interact with GTP-bound translation factors. Is thus essential for accurate translation. The sequence is that of Large ribosomal subunit protein bL12 from Cupriavidus taiwanensis (strain DSM 17343 / BCRC 17206 / CCUG 44338 / CIP 107171 / LMG 19424 / R1) (Ralstonia taiwanensis (strain LMG 19424)).